The primary structure comprises 354 residues: MLDKLDRLEEEYRELEALLSDPEVLKDKGRYQSLSRRYAEMGEVIGLIREYRKVLEDLEQAESLLDDPELKEMAKAEREALLARKEALEKELERHLLPKDPMDERDAIVEIRAGTGGEEAALFARDLFNMYLRFAEEMGFETEVLDSHPTDLGGFSKVVFEVRGPGAYGTFKYESGVHRVQRVPVTETQGRIHTSTATVAVLPKAEEEDFALNMDEIRIDVMRASGPGGQGVNTTDSAVRVVHLPTGIMVTCQDSRSQIKNREKALMILRSRLLEMKRAEEAERLRKTRLAQIGTGERSEKIRTYNFPQSRVTDHRIGFTTHDLEGVLSGHLTPILEALKRADQERQLAALAEG.

Q230 is modified (N5-methylglutamine).

It belongs to the prokaryotic/mitochondrial release factor family. Methylated by PrmC. Methylation increases the termination efficiency of RF1.

It is found in the cytoplasm. Functionally, peptide chain release factor 1 directs the termination of translation in response to the peptide chain termination codons UAG and UAA. In Thermus thermophilus (strain ATCC BAA-163 / DSM 7039 / HB27), this protein is Peptide chain release factor 1.